Consider the following 212-residue polypeptide: Ribosomal RNA small subunit methyltransferase G (212 aa).

Residues glycine 80, leucine 85, 131–132, and arginine 146 contribute to the S-adenosyl-L-methionine site; that span reads AE.

Belongs to the methyltransferase superfamily. RNA methyltransferase RsmG family.

The protein resides in the cytoplasm. The catalysed reaction is guanosine(527) in 16S rRNA + S-adenosyl-L-methionine = N(7)-methylguanosine(527) in 16S rRNA + S-adenosyl-L-homocysteine. Specifically methylates the N7 position of guanine in position 527 of 16S rRNA. This Xanthomonas euvesicatoria pv. vesicatoria (strain 85-10) (Xanthomonas campestris pv. vesicatoria) protein is Ribosomal RNA small subunit methyltransferase G.